The primary structure comprises 216 residues: Probable nicotinate-nucleotide adenylyltransferase (216 aa).

This sequence belongs to the NadD family.

It carries out the reaction nicotinate beta-D-ribonucleotide + ATP + H(+) = deamido-NAD(+) + diphosphate. It functions in the pathway cofactor biosynthesis; NAD(+) biosynthesis; deamido-NAD(+) from nicotinate D-ribonucleotide: step 1/1. Its function is as follows. Catalyzes the reversible adenylation of nicotinate mononucleotide (NaMN) to nicotinic acid adenine dinucleotide (NaAD). This is Probable nicotinate-nucleotide adenylyltransferase from Shewanella pealeana (strain ATCC 700345 / ANG-SQ1).